A 450-amino-acid chain; its full sequence is Probable glycine dehydrogenase (decarboxylating) subunit 1 (450 aa).

Belongs to the GcvP family. N-terminal subunit subfamily. As to quaternary structure, the glycine cleavage system is composed of four proteins: P, T, L and H. In this organism, the P 'protein' is a heterodimer of two subunits.

It carries out the reaction N(6)-[(R)-lipoyl]-L-lysyl-[glycine-cleavage complex H protein] + glycine + H(+) = N(6)-[(R)-S(8)-aminomethyldihydrolipoyl]-L-lysyl-[glycine-cleavage complex H protein] + CO2. The glycine cleavage system catalyzes the degradation of glycine. The P protein binds the alpha-amino group of glycine through its pyridoxal phosphate cofactor; CO(2) is released and the remaining methylamine moiety is then transferred to the lipoamide cofactor of the H protein. This Staphylococcus haemolyticus (strain JCSC1435) protein is Probable glycine dehydrogenase (decarboxylating) subunit 1.